We begin with the raw amino-acid sequence, 257 residues long: Triosephosphate isomerase (257 aa).

9–11 (NWK) serves as a coordination point for substrate. Catalysis depends on H97, which acts as the Electrophile. E169 acts as the Proton acceptor in catalysis. Residues G175, S214, and 235–236 (GG) each bind substrate.

Belongs to the triosephosphate isomerase family. As to quaternary structure, homodimer.

Its subcellular location is the cytoplasm. It catalyses the reaction D-glyceraldehyde 3-phosphate = dihydroxyacetone phosphate. Its pathway is carbohydrate biosynthesis; gluconeogenesis. It participates in carbohydrate degradation; glycolysis; D-glyceraldehyde 3-phosphate from glycerone phosphate: step 1/1. Functionally, involved in the gluconeogenesis. Catalyzes stereospecifically the conversion of dihydroxyacetone phosphate (DHAP) to D-glyceraldehyde-3-phosphate (G3P). This Vibrio cholerae serotype O1 (strain ATCC 39315 / El Tor Inaba N16961) protein is Triosephosphate isomerase.